Here is a 449-residue protein sequence, read N- to C-terminus: MTDLHKEWEKVQEMAFASWVNSVLEKRGGVEKISDVSTDLSDGVKLIFFLESVSGKKFPKKFDLEPKTRILRIQNLHLAMLFVDEDLKVKVQGVAAEEFVDNNKKMILGFLWTLYRKYRISVINEGDKSSEEGLLAWVKKTTDGYSGVNITNFKASFRDGNAYLALAHKFDPSVFKYDEFSGKDQIERLNAAFDFAEKGLGIPKLLDAESLSKGNVDERSIILYTSLFFHAYRAKEEREALEASQNSLANKLASLEQSLEGEKTSQDELARQKKELEESLRLIRQQNEQRNQRIADIQSKIDDALRGIDDEKMAKLDLESRLSKTEKDKAILELKLAETLDENERLRNKIEEDKKRAAAEAEGLGLLRTHIGHQITDIAKWQSFLDNPEAVPYTKTPVNLEAELASLQFEEQAKRLGSKVENENISLEKYLSLKEEELKSAGAPKKRTK.

The tract at residues 1-231 (MTDLHKEWEK…ILYTSLFFHA (231 aa)) is actin-binding. 2 consecutive Calponin-homology (CH) domains span residues 10-119 (KVQE…RKYR) and 128-233 (KSSE…HAYR). 2 coiled-coil regions span residues 232-364 (YRAK…AEGL) and 408-441 (QFEE…LKSA).

The protein belongs to the cortexillin family. In terms of assembly, homodimer; parallel.

It localises to the cytoplasm. It is found in the cytoskeleton. In terms of biological role, actin-bundling protein. When linked to F-actin the actin filaments form preferentially anti-parallel bundles that associate into meshworks. Plays a major role in cytokinesis. The polypeptide is Cortexillin-2 (ctxB) (Heterostelium pallidum (strain ATCC 26659 / Pp 5 / PN500) (Cellular slime mold)).